Here is a 72-residue protein sequence, read N- to C-terminus: Translation initiation factor IF-1 (72 aa).

Residues 1-72 enclose the S1-like domain; sequence MSKDDVIEMQ…TRGRITWRAK (72 aa).

This sequence belongs to the IF-1 family. Component of the 30S ribosomal translation pre-initiation complex which assembles on the 30S ribosome in the order IF-2 and IF-3, IF-1 and N-formylmethionyl-tRNA(fMet); mRNA recruitment can occur at any time during PIC assembly.

The protein resides in the cytoplasm. In terms of biological role, one of the essential components for the initiation of protein synthesis. Stabilizes the binding of IF-2 and IF-3 on the 30S subunit to which N-formylmethionyl-tRNA(fMet) subsequently binds. Helps modulate mRNA selection, yielding the 30S pre-initiation complex (PIC). Upon addition of the 50S ribosomal subunit IF-1, IF-2 and IF-3 are released leaving the mature 70S translation initiation complex. The polypeptide is Translation initiation factor IF-1 (Clostridium botulinum (strain ATCC 19397 / Type A)).